The primary structure comprises 87 residues: Cell division topological specificity factor (87 aa).

It belongs to the MinE family.

Its function is as follows. Prevents the cell division inhibition by proteins MinC and MinD at internal division sites while permitting inhibition at polar sites. This ensures cell division at the proper site by restricting the formation of a division septum at the midpoint of the long axis of the cell. This Neisseria gonorrhoeae (strain ATCC 700825 / FA 1090) protein is Cell division topological specificity factor.